The primary structure comprises 242 residues: Triosephosphate isomerase (242 aa).

8 to 10 contributes to the substrate binding site; that stretch reads NWK. Catalysis depends on histidine 98, which acts as the Electrophile. The active-site Proton acceptor is the glutamate 167. Substrate is bound by residues glycine 173, serine 205, and 226-227; that span reads GG.

The protein belongs to the triosephosphate isomerase family. As to quaternary structure, homodimer.

It localises to the cytoplasm. It carries out the reaction D-glyceraldehyde 3-phosphate = dihydroxyacetone phosphate. It participates in carbohydrate biosynthesis; gluconeogenesis. The protein operates within carbohydrate degradation; glycolysis; D-glyceraldehyde 3-phosphate from glycerone phosphate: step 1/1. Involved in the gluconeogenesis. Catalyzes stereospecifically the conversion of dihydroxyacetone phosphate (DHAP) to D-glyceraldehyde-3-phosphate (G3P). The sequence is that of Triosephosphate isomerase from Mesomycoplasma hyopneumoniae (strain 7448) (Mycoplasma hyopneumoniae).